The sequence spans 627 residues: Endoglucanase 5 (627 aa).

Positions 1-26 (MRKFGGSLFGVSLLLSVLLAAATAAA) are cleaved as a signal peptide. Catalysis depends on Asp83, which acts as the Nucleophile. N-linked (GlcNAc...) asparagine glycosylation is present at Asn196. His416 is an active-site residue. The N-linked (GlcNAc...) asparagine glycan is linked to Asn465. Active-site residues include Asp468 and Glu477. Residue Asn561 is glycosylated (N-linked (GlcNAc...) asparagine).

It belongs to the glycosyl hydrolase 9 (cellulase E) family.

Its subcellular location is the secreted. The catalysed reaction is Endohydrolysis of (1-&gt;4)-beta-D-glucosidic linkages in cellulose, lichenin and cereal beta-D-glucans.. The protein is Endoglucanase 5 of Arabidopsis thaliana (Mouse-ear cress).